The primary structure comprises 55 residues: ATP synthase F(0) complex subunit 8 (55 aa).

A helical membrane pass occupies residues leucine 4–leucine 24.

The protein belongs to the ATPase protein 8 family. In terms of assembly, component of the ATP synthase complex composed at least of ATP5F1A/subunit alpha, ATP5F1B/subunit beta, ATP5MC1/subunit c (homooctomer), MT-ATP6/subunit a, MT-ATP8/subunit 8, ATP5ME/subunit e, ATP5MF/subunit f, ATP5MG/subunit g, ATP5MK/subunit k, ATP5MJ/subunit j, ATP5F1C/subunit gamma, ATP5F1D/subunit delta, ATP5F1E/subunit epsilon, ATP5PF/subunit F6, ATP5PB/subunit b, ATP5PD/subunit d, ATP5PO/subunit OSCP. ATP synthase complex consists of a soluble F(1) head domain (subunits alpha(3) and beta(3)) - the catalytic core - and a membrane F(0) domain - the membrane proton channel (subunits c, a, 8, e, f, g, k and j). These two domains are linked by a central stalk (subunits gamma, delta, and epsilon) rotating inside the F1 region and a stationary peripheral stalk (subunits F6, b, d, and OSCP).

It is found in the mitochondrion membrane. Functionally, subunit 8, of the mitochondrial membrane ATP synthase complex (F(1)F(0) ATP synthase or Complex V) that produces ATP from ADP in the presence of a proton gradient across the membrane which is generated by electron transport complexes of the respiratory chain. ATP synthase complex consist of a soluble F(1) head domain - the catalytic core - and a membrane F(1) domain - the membrane proton channel. These two domains are linked by a central stalk rotating inside the F(1) region and a stationary peripheral stalk. During catalysis, ATP synthesis in the catalytic domain of F(1) is coupled via a rotary mechanism of the central stalk subunits to proton translocation. In vivo, can only synthesize ATP although its ATP hydrolase activity can be activated artificially in vitro. Part of the complex F(0) domain. The polypeptide is ATP synthase F(0) complex subunit 8 (Pelomedusa subrufa (African side-necked turtle)).